Here is a 385-residue protein sequence, read N- to C-terminus: Rhomboid domain-containing protein 3 (385 aa).

5 helical membrane passes run 13 to 33, 58 to 78, 93 to 113, 146 to 166, and 168 to 188; these read ALPLASSVLMLLLSCLWLLGA, LGHTALPGLLLSLLLLPTLGW, SAVLALATGLLAVLLAGLGLS, WLLPWLLLALTLLLSSEPPFL, and LLCGLLAGLAYAAGAFRWLEL. The region spanning 322–361 is the UBA domain; it reads SVSSLRLQQLQHMGFPTEQAAVALAATGRVEGAVSLLVEG.

The protein localises to the membrane. The protein is Rhomboid domain-containing protein 3 (Rhbdd3) of Rattus norvegicus (Rat).